Here is a 320-residue protein sequence, read N- to C-terminus: Adenosine receptor A3 (320 aa).

The Extracellular portion of the chain corresponds to 1-16 (MKANNTTTSALWLQIT). N4 and N5 each carry an N-linked (GlcNAc...) asparagine glycan. Residues 17–39 (YITMEAAIGLCAVVGNMLVIWVV) traverse the membrane as a helical segment. The Cytoplasmic segment spans residues 40 to 50 (KLNRTLRTTTF). Residues 51 to 74 (YFIVSLALADIAVGVLVIPLAIAV) form a helical membrane-spanning segment. Topologically, residues 75-86 (SLEVQMHFYACL) are extracellular. A disulfide bridge links C85 with C168. The chain crosses the membrane as a helical span at residues 87 to 108 (FMSCVLLVFTHASIMSLLAIAV). Residues 109 to 128 (DRYLRVKLTVRYRTVTTQRR) are Cytoplasmic-facing. Residues 129-150 (IWLFLGLCWLVSFLVGLTPMFG) form a helical membrane-spanning segment. Over 151–179 (WNRKVTLELSQNSSTLSCHFRSVVGLDYM) the chain is Extracellular. A helical transmembrane segment spans residues 180 to 200 (VFFSFITWILIPLVVMCIIYL). Residues 201–233 (DIFYIIRNKLSQNLTGFRETRAFYGREFKTAKS) lie on the Cytoplasmic side of the membrane. A helical membrane pass occupies residues 234 to 257 (LFLVLFLFALCWLPLSIINFVSYF). Residues 258 to 263 (NVKIPE) are Extracellular-facing. The chain crosses the membrane as a helical span at residues 264-286 (IAMCLGILLSHANSMMNPIVYAC). Residues 287–320 (KIKKFKETYFVILRACRLCQTSDSLDSNLEQTTE) lie on the Cytoplasmic side of the membrane. C305 carries S-palmitoyl cysteine lipidation. Residues T307, T318, and T319 each carry the phosphothreonine modification.

Belongs to the G-protein coupled receptor 1 family. Post-translationally, phosphorylation on Thr-318 and Thr-319 may be crucial for rapid desensitization. Phosphorylation on Thr-318 may be necessary for phosphorylation on Thr-319 to occur. Testis, particularly in spermatocytes and spermatids but not in spermatogonia. Low levels in the brain.

The protein resides in the cell membrane. Receptor for adenosine. The activity of this receptor is mediated by G proteins which inhibits adenylyl cyclase. May play a role during reproduction. The chain is Adenosine receptor A3 (Adora3) from Rattus norvegicus (Rat).